The sequence spans 124 residues: Small ribosomal subunit protein uS12 (124 aa).

D89 carries the 3-methylthioaspartic acid modification.

This sequence belongs to the universal ribosomal protein uS12 family. As to quaternary structure, part of the 30S ribosomal subunit. Contacts proteins S8 and S17. May interact with IF1 in the 30S initiation complex.

With S4 and S5 plays an important role in translational accuracy. In terms of biological role, interacts with and stabilizes bases of the 16S rRNA that are involved in tRNA selection in the A site and with the mRNA backbone. Located at the interface of the 30S and 50S subunits, it traverses the body of the 30S subunit contacting proteins on the other side and probably holding the rRNA structure together. The combined cluster of proteins S8, S12 and S17 appears to hold together the shoulder and platform of the 30S subunit. The protein is Small ribosomal subunit protein uS12 of Mannheimia succiniciproducens (strain KCTC 0769BP / MBEL55E).